The sequence spans 622 residues: Chaperone protein HscA homolog (622 aa).

The protein belongs to the heat shock protein 70 family.

Its function is as follows. Chaperone involved in the maturation of iron-sulfur cluster-containing proteins. Has a low intrinsic ATPase activity which is markedly stimulated by HscB. The sequence is that of Chaperone protein HscA homolog from Burkholderia pseudomallei (strain K96243).